Reading from the N-terminus, the 418-residue chain is Methylmalonic aciduria type A protein, mitochondrial (418 aa).

The transit peptide at 1 to 65 (MPMLLPHPHQ…LLSDGLKRKL (65 aa)) directs the protein to the mitochondrion. Residues 150–158 (GPPGAGKST), Asp-292, and 328–330 (SAR) each bind GTP.

Belongs to the SIMIBI class G3E GTPase family. ArgK/MeaB subfamily. Homodimer. Interacts with MMUT (the apoenzyme form); the interaction is GTP dependent. Widely expressed. Highest expression is observed in liver and skeletal muscle.

It is found in the mitochondrion. It localises to the cytoplasm. It carries out the reaction GTP + H2O = GDP + phosphate + H(+). Its activity is regulated as follows. GTPase activity is stimulated by MMUT. In terms of biological role, GTPase, binds and hydrolyzes GTP. Involved in intracellular vitamin B12 metabolism, mediates the transport of cobalamin (Cbl) into mitochondria for the final steps of adenosylcobalamin (AdoCbl) synthesis. Functions as a G-protein chaperone that assists AdoCbl cofactor delivery from MMAB to the methylmalonyl-CoA mutase (MMUT). Plays a dual role as both a protectase and a reactivase for MMUT. Protects MMUT from progressive inactivation by oxidation by decreasing the rate of the formation of the oxidized inactive cofactor hydroxocobalamin (OH2Cbl). Additionally acts a reactivase by promoting the replacement of OH2Cbl by the active cofactor AdoCbl, restoring the activity of MMUT in the presence and hydrolysis of GTP. This Homo sapiens (Human) protein is Methylmalonic aciduria type A protein, mitochondrial.